Here is a 509-residue protein sequence, read N- to C-terminus: MSPNTPLVLVILDGWGCGDRVEGNAIAQADTPNWNRYRSVWPRTVLKCSGEDVGLPPGQMGNSEVGHLNLGAGRIVYQDLTRITRAVRDGSFFENAVLRTSIEASRRNGHALHLMGLLSDGGVHSHISHLFALLELAGRLDQRSVYVHAFLDGRDVPPANALEYVEALEDKLKTLGYGAVASVIGRYYAMDRDRRWERTARAYRAMVYGEGLRASSARQAVEKGYERGETDEFIQPTVIVRDGRPVAQVRDGDALVFFNFRPDRARQITRSFTDAEFGGFERGPAPAFPDFVCLTQYDRTIVAPVAFGPQELTNTLGNVLSRHGLRQLRLAETEKYAHVTFFFNGGVEQRDPGEDRLLIPSPKVPTYDLKPEMSAREVTDAFLANIEKYDIIIMNYANPDMVGHTGDLSAAIKAVETVDECLGRVVEAVLARGGTVLVSGDHGNAEHMCDAEGCPLTAHTCNPVPLLIIGEAVAGRSLRPGSLQDVAPTILDLLGLPKPPEMTGTSLLS.

Mn(2+) contacts are provided by Asp-13 and Ser-63. Catalysis depends on Ser-63, which acts as the Phosphoserine intermediate. Residues His-124, 154–155, Arg-186, Arg-192, 261–264, and Lys-335 contribute to the substrate site; these read RD and RPDR. Mn(2+)-binding residues include Asp-400, His-404, Asp-441, His-442, and His-459.

Belongs to the BPG-independent phosphoglycerate mutase family. Monomer. It depends on Mn(2+) as a cofactor.

It catalyses the reaction (2R)-2-phosphoglycerate = (2R)-3-phosphoglycerate. It functions in the pathway carbohydrate degradation; glycolysis; pyruvate from D-glyceraldehyde 3-phosphate: step 3/5. In terms of biological role, catalyzes the interconversion of 2-phosphoglycerate and 3-phosphoglycerate. The sequence is that of 2,3-bisphosphoglycerate-independent phosphoglycerate mutase from Desulforudis audaxviator (strain MP104C).